The sequence spans 61 residues: Large ribosomal subunit protein uL30 (61 aa).

It belongs to the universal ribosomal protein uL30 family. As to quaternary structure, part of the 50S ribosomal subunit.

The polypeptide is Large ribosomal subunit protein uL30 (Oenococcus oeni (strain ATCC BAA-331 / PSU-1)).